A 260-amino-acid chain; its full sequence is Phosphate import ATP-binding protein PstB 5 (260 aa).

The region spanning 9 to 255 is the ABC transporter domain; that stretch reads IKVKDLSFYY…PLDSRTRDYV (247 aa). Residue 41–48 participates in ATP binding; the sequence is GPSGCGKS.

It belongs to the ABC transporter superfamily. Phosphate importer (TC 3.A.1.7) family. As to quaternary structure, the complex is composed of two ATP-binding proteins (PstB), two transmembrane proteins (PstC and PstA) and a solute-binding protein (PstS).

Its subcellular location is the cell inner membrane. It carries out the reaction phosphate(out) + ATP + H2O = ADP + 2 phosphate(in) + H(+). Part of the ABC transporter complex PstSACB involved in phosphate import. Responsible for energy coupling to the transport system. In Trichormus variabilis (strain ATCC 29413 / PCC 7937) (Anabaena variabilis), this protein is Phosphate import ATP-binding protein PstB 5.